Here is a 486-residue protein sequence, read N- to C-terminus: Cobyric acid synthase (486 aa).

Residues 248-439 form the GATase cobBQ-type domain; sequence MLRVVVPVLP…VHGLFDTPAA (192 aa). Catalysis depends on Cys329, which acts as the Nucleophile. Residue His431 is part of the active site.

This sequence belongs to the CobB/CobQ family. CobQ subfamily.

It functions in the pathway cofactor biosynthesis; adenosylcobalamin biosynthesis. Its function is as follows. Catalyzes amidations at positions B, D, E, and G on adenosylcobyrinic A,C-diamide. NH(2) groups are provided by glutamine, and one molecule of ATP is hydrogenolyzed for each amidation. The protein is Cobyric acid synthase of Paraburkholderia phytofirmans (strain DSM 17436 / LMG 22146 / PsJN) (Burkholderia phytofirmans).